The sequence spans 619 residues: DNA mismatch repair protein MutL (619 aa).

This sequence belongs to the DNA mismatch repair MutL/HexB family.

In terms of biological role, this protein is involved in the repair of mismatches in DNA. It is required for dam-dependent methyl-directed DNA mismatch repair. May act as a 'molecular matchmaker', a protein that promotes the formation of a stable complex between two or more DNA-binding proteins in an ATP-dependent manner without itself being part of a final effector complex. In Shewanella frigidimarina (strain NCIMB 400), this protein is DNA mismatch repair protein MutL.